Consider the following 169-residue polypeptide: Neurotensin/neuromedin N (169 aa).

The first 22 residues, 1-22 (MIGMNLQLVCLTLLAFSSWSLC), serve as a signal peptide directing secretion.

This sequence belongs to the neurotensin family. As to quaternary structure, interacts with NTSR1. Interacts with SORT1. Interacts with SORL1. Post-translationally, neurotensin is cleaved and degraded by Angiotensin-converting enzyme (ACE) and neprilysin (MME).

The protein resides in the secreted. It is found in the cytoplasmic vesicle. The protein localises to the secretory vesicle. Its function is as follows. Neurotensin may play an endocrine or paracrine role in the regulation of fat metabolism. It causes contraction of smooth muscle. This Rattus norvegicus (Rat) protein is Neurotensin/neuromedin N (Nts).